Reading from the N-terminus, the 343-residue chain is UPF0324 membrane protein LJ_1117 (343 aa).

The next 10 membrane-spanning stretches (helical) occupy residues 10–27 (FGLAAVMTLICSVAGIFL), 32–54 (YVNLIGALVIALLLGISLQVLPV), 64–86 (IGFISNKFLRLGIILLGFRLNLT), 91–113 (AGIKTILVAMLGVSGTIVLTYWL), 123–145 (LAVLSACGCGICGAAAVMGVSPQ), 157–179 (NEVLAVAVVCVMGTVFTLLEIVI), 219–241 (ALIMKLSRVLLLAPVALIIGYWY), 262–284 (IPWFLGGFILTSILGTFLPFPPV), 288–310 (GLVQAAYVFLGMAMAALGISVNF), and 317–339 (GGTVFGAAAISSTCLMIFMIIMS).

It belongs to the UPF0324 family.

It is found in the cell membrane. The polypeptide is UPF0324 membrane protein LJ_1117 (Lactobacillus johnsonii (strain CNCM I-12250 / La1 / NCC 533)).